Here is an 81-residue protein sequence, read N- to C-terminus: Antitoxin VapB20 (81 aa).

Functionally, antitoxin component of a type II toxin-antitoxin (TA) system. Neutralizes the toxic effect of cognate toxin VapC20. The protein is Antitoxin VapB20 (vapB20) of Mycobacterium tuberculosis (strain CDC 1551 / Oshkosh).